The following is an 802-amino-acid chain: uncharacterized protein (802 aa).

Residues 6-41 form the EF-hand 1 domain; that stretch reads SRSEKVKRIFQQFDGNLDGGLSREEMSALVVAVNPR. TPR repeat units lie at residues 229–262, 264–296, 305–338, 339–372, 373–406, 407–440, and 442–474; these read FDGHMAIGKVLYEHQLFKEALVSFKRACELQPTD, RPHFKAGNCLYVLGKYKESKDEFLLALEAAESG, PQIYVNLGISLEGEGMVLSACEYYREAAILCPTH, YRALKLLGSALFGVGEYRAAVKALEEAIYLKPDY, ADAHCDLASSLHAMGEDERAIEVFQRAIDLKPGH, VDALYNLGGLYMDLGRFQRASEMYTRVLAVWPNH, and RAQLNKAVSLLGAGETEEAKRALKEALKMTNRV. The region spanning 595–630 is the EF-hand 2 domain; that stretch reads AIKAINEKILSVLDDSGSGRVDLGMFYAVIAPLCGG.

This is an uncharacterized protein from Arabidopsis thaliana (Mouse-ear cress).